A 492-amino-acid chain; its full sequence is Catalase isozyme 2 (492 aa).

Active-site residues include His-65 and Asn-138. A heme-binding site is contributed by Tyr-348.

This sequence belongs to the catalase family. In terms of assembly, homotetramer. Heme is required as a cofactor.

It localises to the peroxisome. Its subcellular location is the glyoxysome. It carries out the reaction 2 H2O2 = O2 + 2 H2O. In terms of biological role, occurs in almost all aerobically respiring organisms and serves to protect cells from the toxic effects of hydrogen peroxide. This is Catalase isozyme 2 (CAT2) from Solanum tuberosum (Potato).